The sequence spans 967 residues: Leucine-rich repeat-containing G-protein coupled receptor 6 (967 aa).

The N-terminal stretch at 1 to 24 (MPSPPGLRALWLCAALCASRRAGG) is a signal peptide. At 25-567 (APQPGPGPTA…LFESWGIRLA (543 aa)) the chain is on the extracellular side. The 41-residue stretch at 26–66 (PQPGPGPTACPAPCHCQEDGIMLSADCSELGLSAVPGDLDP) folds into the LRRNT domain. Asparagine 77 carries N-linked (GlcNAc...) asparagine glycosylation. LRR repeat units lie at residues 91–112 (FLEE…AFSG), 115–136 (SLKI…ALWE), 139–160 (SLQS…SFEG), 163–186 (SLRH…NNLP), 187–208 (ALQA…AFQN), 211–232 (SLVV…SFEG), 235–256 (NLET…IRTL), 258–279 (RLQE…AFMG), 282–303 (LLQT…AFQY), 306–328 (KLHT…KGTT), 329–350 (SLEI…MCQQ), 353–374 (RLRV…HRCQ), 375–396 (KLEE…TFSQ), 399–420 (SLQA…AFST), and 423–443 (SLVK…AGLG). N-linked (GlcNAc...) asparagine glycosylation is present at asparagine 208. A helical membrane pass occupies residues 568–588 (VWAIVLLSVLCNGLVLLTVFA). Over 589-598 (GGPVPLPPVK) the chain is Cytoplasmic. A helical transmembrane segment spans residues 599-619 (FVVGAIAGANTLTGISCGLLA). Topologically, residues 620–644 (SVDALTFGQFSEYGARWETGLGCRA) are extracellular. Residues cysteine 642 and cysteine 717 are joined by a disulfide bond. A helical membrane pass occupies residues 645-665 (TGFLAVLGSEASVLLLTLAAV). At 666–687 (QCSVSVSCVRAYGKSPSLGSVR) the chain is on the cytoplasmic side. Residues 688-708 (AGVLGCLALAGLAAALPLASV) form a helical membrane-spanning segment. At 709 to 727 (GEYGASPLCLPYAPPEGQP) the chain is on the extracellular side. A helical transmembrane segment spans residues 728–748 (AALGFTVALVMMNSFCFLVVA). At 749 to 774 (GAYIKLYCDLPRGDFEAVWDCAMVRH) the chain is on the cytoplasmic side. Residues 775 to 795 (VAWLIFADGLLYCPVAFLSFA) form a helical membrane-spanning segment. Topologically, residues 796-809 (SMLGLFPVTPEAVK) are extracellular. A helical transmembrane segment spans residues 810-830 (SVLLVVLPLPACLNPLLYLLF). Residues 831–967 (NPHFRDDLRR…PSGLAFASHV (137 aa)) are Cytoplasmic-facing.

It belongs to the G-protein coupled receptor 1 family.

The protein localises to the cell membrane. Its function is as follows. Receptor for R-spondins that potentiates the canonical Wnt signaling pathway and acts as a marker of multipotent stem cells in the epidermis. Upon binding to R-spondins (RSPO1, RSPO2, RSPO3 or RSPO4), associates with phosphorylated LRP6 and frizzled receptors that are activated by extracellular Wnt receptors, triggering the canonical Wnt signaling pathway to increase expression of target genes. In contrast to classical G-protein coupled receptors, does not activate heterotrimeric G-proteins to transduce the signal. May act as a tumor suppressor. The polypeptide is Leucine-rich repeat-containing G-protein coupled receptor 6 (LGR6) (Homo sapiens (Human)).